The following is a 382-amino-acid chain: Alcohol dehydrogenase 4 (382 aa).

D40, N72, G99, S100, T139, T140, T148, F150, K161, and G183 together coordinate NAD(+). Fe(2+)-binding residues include D195, H199, and H264. Residues H268 and H278 each coordinate NAD(+). Residue H278 participates in Fe(2+) binding.

Belongs to the iron-containing alcohol dehydrogenase family. Homodimer. Zn(2+) serves as cofactor. Requires Fe(2+) as cofactor.

It is found in the mitochondrion. The catalysed reaction is a primary alcohol + NAD(+) = an aldehyde + NADH + H(+). The enzyme catalyses ethanol + NAD(+) = acetaldehyde + NADH + H(+). Its activity is regulated as follows. Inhibited by EDTA. In terms of biological role, alcohol dehydrogenase specific for ethanol. Acts mainyl as a mitochondrial formaldehyde dehydrogenase and has no effect on ethanol production. Shows drastically reduced activity towards primary alcohols from 4 carbon atoms upward. Isomers of aliphatic alcohol, as well as secondary alcohols and glycerol are not used at all. The role of ADH4 in yeast metabolism is not yet known, but ADH4 is not responsible for the production of ethanol during growth on glucose nor responsible for the oxidation of ethanol to acetaldehyde. This chain is Alcohol dehydrogenase 4, found in Saccharomyces cerevisiae (strain ATCC 204508 / S288c) (Baker's yeast).